We begin with the raw amino-acid sequence, 226 residues long: Phosphoglycolate phosphatase (226 aa).

The active-site Nucleophile is Asp9. Mg(2+) is bound by residues Asp9 and Asp11. Residue Lys150 coordinates substrate. Positions 173 and 177 each coordinate Mg(2+).

This sequence belongs to the archaeal SPP-like hydrolase family. It depends on Mg(2+) as a cofactor.

It carries out the reaction 2-phosphoglycolate + H2O = glycolate + phosphate. In terms of biological role, catalyzes the dephosphorylation of 2-phosphoglycolate. In Methanococcoides burtonii (strain DSM 6242 / NBRC 107633 / OCM 468 / ACE-M), this protein is Phosphoglycolate phosphatase.